Reading from the N-terminus, the 108-residue chain is Ribonuclease P protein component (108 aa).

It belongs to the RnpA family. In terms of assembly, consists of a catalytic RNA component (M1 or rnpB) and a protein subunit.

The enzyme catalyses Endonucleolytic cleavage of RNA, removing 5'-extranucleotides from tRNA precursor.. RNaseP catalyzes the removal of the 5'-leader sequence from pre-tRNA to produce the mature 5'-terminus. It can also cleave other RNA substrates such as 4.5S RNA. The protein component plays an auxiliary but essential role in vivo by binding to the 5'-leader sequence and broadening the substrate specificity of the ribozyme. The protein is Ribonuclease P protein component of Campylobacter jejuni subsp. doylei (strain ATCC BAA-1458 / RM4099 / 269.97).